We begin with the raw amino-acid sequence, 329 residues long: Quinone-oxidoreductase homolog, chloroplastic (329 aa).

This sequence belongs to the zinc-containing alcohol dehydrogenase family. Quinone oxidoreductase subfamily. Post-translationally, the transit peptide is not cleaved.

Its subcellular location is the plastid. It is found in the chloroplast inner membrane. In Spinacia oleracea (Spinach), this protein is Quinone-oxidoreductase homolog, chloroplastic (QOR).